The following is a 96-amino-acid chain: UPF0235 protein Helmi_20270 (96 aa).

The protein belongs to the UPF0235 family.

The protein is UPF0235 protein Helmi_20270 of Heliobacterium modesticaldum (strain ATCC 51547 / Ice1).